Consider the following 128-residue polypeptide: Large ribosomal subunit protein uL22 (128 aa).

It belongs to the universal ribosomal protein uL22 family. As to quaternary structure, part of the 50S ribosomal subunit.

In terms of biological role, this protein binds specifically to 23S rRNA; its binding is stimulated by other ribosomal proteins, e.g. L4, L17, and L20. It is important during the early stages of 50S assembly. It makes multiple contacts with different domains of the 23S rRNA in the assembled 50S subunit and ribosome. Its function is as follows. The globular domain of the protein is located near the polypeptide exit tunnel on the outside of the subunit, while an extended beta-hairpin is found that lines the wall of the exit tunnel in the center of the 70S ribosome. This is Large ribosomal subunit protein uL22 from Rhodopseudomonas palustris (strain BisB18).